The sequence spans 57 residues: Large ribosomal subunit protein bL32 (57 aa).

Residues 1-19 (MAVPKRRMSRSNTRSRRSQ) show a composition bias toward basic residues. Positions 1-22 (MAVPKRRMSRSNTRSRRSQWKA) are disordered.

The protein belongs to the bacterial ribosomal protein bL32 family.

In Rhodococcus jostii (strain RHA1), this protein is Large ribosomal subunit protein bL32.